The following is a 415-amino-acid chain: Secernin-2 (415 aa).

C8 is an active-site residue.

It belongs to the peptidase C69 family. Secernin subfamily.

This Danio rerio (Zebrafish) protein is Secernin-2 (scrn2).